Here is a 612-residue protein sequence, read N- to C-terminus: Protein lin-61 (612 aa).

MBT repeat units follow at residues 143-249, 263-380, 381-501, and 508-607; these read YLWE…MDKI, NDMV…GYQL, NAKK…LVPP, and FRWD…LQPP.

Interacts preferentially with histone H3 that is dimethylated or trimethylated at 'Lys-9'.

Its subcellular location is the nucleus. It localises to the chromosome. In terms of biological role, synthetic multivulva class B (synMuvB) protein required to repress the induction of vulval development by Ras signaling. Unlike other synMuv proteins it does not associate with the multiprotein DRM complex and the NuRD-like complex. Interaction with methylated histone H3 is essential for vulva development. It has a role in maintaining genome stability. The sequence is that of Protein lin-61 (lin-61) from Caenorhabditis elegans.